Consider the following 343-residue polypeptide: Zinc finger CCCH domain-containing protein 1 (343 aa).

The interval 1 to 102 (MSDSGEPKPS…PERSVFHYDS (102 aa)) is disordered. The segment covering 7-25 (PKPSQQEEPLPQPAAQETQ) has biased composition (low complexity). A compositionally biased stretch (basic residues) spans 35–44 (KPTKSKNIRK). Residues 79 to 91 (SSGPSKSSTTTSG) show a composition bias toward low complexity. A C3H1-type zinc finger spans residues 200–228 (DYQPDICKDYKETGYCGYGDSCKFLHDRG). The segment at 249–268 (RNKAMGVEDEDDEADKDSDE) is disordered. Residues 255–268 (VEDEDDEADKDSDE) show a composition bias toward acidic residues. The RING-type zinc finger occupies 277–315 (CFICREPFVDPVVTKCKHYFCEHCALKHHTKNKKCFVCN).

This chain is Zinc finger CCCH domain-containing protein 1, found in Arabidopsis thaliana (Mouse-ear cress).